The chain runs to 196 residues: Large ribosomal subunit protein eL15 (196 aa).

Basic residues predominate over residues 162–172 (RGKTSAGRRAR). Residues 162-196 (RGKTSAGRRARGLQNRGKGTEGLRPSTNADKRNKS) are disordered.

This sequence belongs to the eukaryotic ribosomal protein eL15 family.

The polypeptide is Large ribosomal subunit protein eL15 (Halobacterium salinarum (strain ATCC 29341 / DSM 671 / R1)).